Consider the following 111-residue polypeptide: UPF0060 membrane protein Cbei_2176 (111 aa).

Helical transmembrane passes span 7-27, 33-53, 60-80, and 85-105; these read ILYF…IWIW, SYLY…IPTL, FGKV…LWGW, and IVPD…VIVI.

Belongs to the UPF0060 family.

The protein localises to the cell membrane. The polypeptide is UPF0060 membrane protein Cbei_2176 (Clostridium beijerinckii (strain ATCC 51743 / NCIMB 8052) (Clostridium acetobutylicum)).